We begin with the raw amino-acid sequence, 680 residues long: DNA-directed RNA polymerase subunit beta' (680 aa).

Zn(2+)-binding residues include Cys69, Cys71, Cys87, and Cys90. Mg(2+)-binding residues include Asp489, Asp491, and Asp493.

It belongs to the RNA polymerase beta' chain family. RpoC1 subfamily. In plastids the minimal PEP RNA polymerase catalytic core is composed of four subunits: alpha, beta, beta', and beta''. When a (nuclear-encoded) sigma factor is associated with the core the holoenzyme is formed, which can initiate transcription. The cofactor is Mg(2+). Zn(2+) is required as a cofactor.

The protein resides in the plastid. It localises to the chloroplast. The enzyme catalyses RNA(n) + a ribonucleoside 5'-triphosphate = RNA(n+1) + diphosphate. In terms of biological role, DNA-dependent RNA polymerase catalyzes the transcription of DNA into RNA using the four ribonucleoside triphosphates as substrates. This is DNA-directed RNA polymerase subunit beta' from Arabidopsis thaliana (Mouse-ear cress).